The primary structure comprises 231 residues: Response regulator MprA (231 aa).

The Response regulatory domain maps to 4–118 (RILVVDDDRA…ELLARMRALL (115 aa)). Asp-48 carries the post-translational modification 4-aspartylphosphate. The ompR/PhoB-type DNA-binding region spans 130–228 (SAAMTFSDLS…VRGVGYVLRE (99 aa)).

In terms of processing, phosphorylated and dephosphorylated by MprB.

The protein resides in the cytoplasm. Functionally, member of the two-component regulatory system MprB/MprA which contributes to maintaining a balance among several systems involved in stress resistance and is required for establishment and maintenance of persistent infection in the host. Functions as a transcriptional regulator that recognizes a 19-bp nucleotide motif comprizing two loosely conserved 8-bp direct DNA-binding motif repeats separated by a 3-bp spacer region. This is Response regulator MprA (mprA) from Mycolicibacterium vanbaalenii (strain DSM 7251 / JCM 13017 / BCRC 16820 / KCTC 9966 / NRRL B-24157 / PYR-1) (Mycobacterium vanbaalenii).